A 504-amino-acid chain; its full sequence is NADH-quinone oxidoreductase subunit N (504 aa).

The next 14 helical transmembrane spans lie at 9–29, 38–58, 78–98, 114–134, 135–155, 164–184, 216–236, 254–274, 282–302, 309–329, 341–361, 392–412, 425–447, and 476–496; these read IALLPIIVIGITIVGIMLSII, AVLTIIGMIIASVSSLLHMMW, VLYVILIMFVGIASSILGYVW, LLIASIGGILLVITNHLIVLF, LGIELISISICGLISYPVFSK, YIILSGVSSSFLLFGIVFIYC, IVIGLSMMMIGMGFKLSCVPF, YLATGSKIAVTAVLMRFLLIL, LHIFLSVSACCSMLFGSLMAI, RMLAYSSITNAGYLLIALIAL, ISVYLVSYLFANVGVWGIVNI, VIFVIAILSLAGIPMTFGFIG, LWFLTVMMIISSIISMFYYLKII, and FMVIIVAIIILFFGVYPQFIV.

It belongs to the complex I subunit 2 family. NDH-1 is composed of 13 different subunits. Subunits NuoA, H, J, K, L, M, N constitute the membrane sector of the complex.

The protein localises to the cell inner membrane. The enzyme catalyses a quinone + NADH + 5 H(+)(in) = a quinol + NAD(+) + 4 H(+)(out). Functionally, NDH-1 shuttles electrons from NADH, via FMN and iron-sulfur (Fe-S) centers, to quinones in the respiratory chain. The immediate electron acceptor for the enzyme in this species is believed to be ubiquinone. Couples the redox reaction to proton translocation (for every two electrons transferred, four hydrogen ions are translocated across the cytoplasmic membrane), and thus conserves the redox energy in a proton gradient. The protein is NADH-quinone oxidoreductase subunit N of Blochmanniella floridana.